A 74-amino-acid chain; its full sequence is uncharacterized protein (74 aa).

2 stretches are compositionally biased toward basic and acidic residues: residues 1-13 (MKKQ…HQLK) and 20-60 (IKAK…KSFE). The disordered stretch occupies residues 1-74 (MKKQKSIDKH…ESQMDWHQYK (74 aa)). The span at 64-74 (NESQMDWHQYK) shows a compositional bias: polar residues.

This is an uncharacterized protein from Bacillus subtilis (strain 168).